A 288-amino-acid chain; its full sequence is Cyclin-dependent kinase 2 homolog (288 aa).

In terms of domain architecture, Protein kinase spans 4 to 284 (YHGLEKIGEG…AKQAIEHPYF (281 aa)). Residues 10–18 (IGEGTYGVV) and lysine 32 each bind ATP. Threonine 14 bears the Phosphothreonine mark. Residue tyrosine 15 is modified to Phosphotyrosine. The Proton acceptor role is filled by aspartate 125. Residue threonine 158 is modified to Phosphothreonine.

The protein belongs to the protein kinase superfamily. CMGC Ser/Thr protein kinase family. CDC2/CDKX subfamily. As to quaternary structure, may form a complex composed of at least the catalytic subunit CRK2 and a cyclin. Mg(2+) serves as cofactor.

The protein resides in the cytoplasm. The catalysed reaction is L-seryl-[protein] + ATP = O-phospho-L-seryl-[protein] + ADP + H(+). It catalyses the reaction L-threonyl-[protein] + ATP = O-phospho-L-threonyl-[protein] + ADP + H(+). The enzyme catalyses [DNA-directed RNA polymerase] + ATP = phospho-[DNA-directed RNA polymerase] + ADP + H(+). With respect to regulation, phosphorylation at Thr-14 or Tyr-15 inactivates the enzyme, while phosphorylation at Thr-158 activates it. Functionally, serine/threonine-protein kinase. Involved in the control of the cell cycle. Required for entry into S-phase and mitosis. Probable component of the kinase complex that phosphorylates the repetitive C-terminus of RNA polymerase II. The sequence is that of Cyclin-dependent kinase 2 homolog from Plasmodium chabaudi chabaudi.